Here is a 504-residue protein sequence, read N- to C-terminus: ATP synthase subunit alpha (504 aa).

An ATP-binding site is contributed by 169 to 176 (GDRGTGKT).

This sequence belongs to the ATPase alpha/beta chains family. As to quaternary structure, F-type ATPases have 2 components, CF(1) - the catalytic core - and CF(0) - the membrane proton channel. CF(1) has five subunits: alpha(3), beta(3), gamma(1), delta(1), epsilon(1). CF(0) has three main subunits: a(1), b(2) and c(9-12). The alpha and beta chains form an alternating ring which encloses part of the gamma chain. CF(1) is attached to CF(0) by a central stalk formed by the gamma and epsilon chains, while a peripheral stalk is formed by the delta and b chains.

The protein resides in the cell inner membrane. The catalysed reaction is ATP + H2O + 4 H(+)(in) = ADP + phosphate + 5 H(+)(out). In terms of biological role, produces ATP from ADP in the presence of a proton gradient across the membrane. The alpha chain is a regulatory subunit. In Leptospira biflexa serovar Patoc (strain Patoc 1 / Ames), this protein is ATP synthase subunit alpha.